A 923-amino-acid polypeptide reads, in one-letter code: MEGAKPTLQLVYQAVQALYHDPDPSGKERASFWLGELQRSVHAWEISDQLLQIRQDVESCYFAAQTMKMKIQTSFYELPTDSHASLRDSLLTHIQNLKDLSPVIVTQLALAIADLALQMPSWKGCVQTLVEKYSNDVTSLPFLLEILTVLPEEVHSRSLRIGANRRTEIIEDLAFYSSTVVSLLMTCVEKAGTDEKMLMKVFRCLGSWFNLGVLDSNFMANNKLLALLFEVLQQDKTSSNLHEAASDCVCSALYAIENVETNLPLAMQLFQGVLTLETAYHMAVAREDLDKVLNYCRIFTELCETFLEKIVCTPGQGLGDLRTLELLLICAGHPQYEVVEISFNFWYRLGEHLYKTNDEVIHGIFKAYIQRLLHALARHCQLEPDHEGVPEETDDFGEFRMRVSDLVKDLIFLIGSMECFAQLYSTLKEGNPPWEVTEAVLFIMAAIAKSVDPENNPTLVEVLEGVVRLPETVHTAVRYTSIELVGEMSEVVDRNPQFLDPVLGYLMKGLCEKPLASAAAKAIHNICSVCRDHMAQHFNGLLEIARSLDSFLLSPEAAVGLLKGTALVLARLPLDKITECLSELCSVQVMALKKLLSQEPSNGISSDPTVFLDRLAVIFRHTNPIVENGQTHPCQKVIQEIWPVLSETLNKHRADNRIVERCCRCLRFAVRCVGKGSAALLQPLVTQMVNVYHVHQHSCFLYLGSILVDEYGMEEGCRQGLLDMLQALCIPTFQLLEQQNGLQNHPDTVDDLFRLATRFIQRSPVTLLRSQVVIPILQWAIASTTLDHRDANCSVMRFLRDLIHTGVANDHEEDFELRKELIGQVMNQLGQQLVSQLLHTCCFCLPPYTLPDVAEVLWEIMQVDRPTFCRWLENSLKGLPKETTVGAVTVTHKQLTDFHKQVTSAEECKQVCWALRDFTRLFR.

Position 1 is an N-acetylmethionine (methionine 1). Residue serine 74 is modified to Phosphoserine. At threonine 896 the chain carries Phosphothreonine.

As to quaternary structure, interacts with (GTP-bound) Ran. Interacts with (phosphorylated) SFRS1 and SFRS2; leading to their nuclear import. Interacts with NUP62. Interacts with RBM4. Interacts with CPSF6, promoting its nuclear import. In terms of assembly, (Microbial infection) Interacts with the HIV-1 pre-integration complex (PIC), which is composed of viral genome, matrix protein, Vpr and integrase. Interacts with HIV-1 integrase protein; the interaction is direct. Expressed in skeletal muscle.

It localises to the nucleus envelope. Its subcellular location is the cytoplasm. Importin, which transports target proteins into the nucleus. Specifically mediates the nuclear import of splicing factor serine/arginine (SR) proteins, such as RBM4, SFRS1 and SFRS2, by recognizing phosphorylated SR domains. Also mediates the nuclear import of serine/arginine (SR) protein CPSF6, independently of CPSF6 phosphorylation. The nuclear import process is regulated by the small GTPase Ran that partitions between cytoplasm and nucleus in the predominantly GDP- and GTP-bound form, respectively. Importin associates with target cargo proteins in the cytoplasm, and the competitive binding of GTP-bound Ran induces the release of cargos in the nucleus. Its function is as follows. (Microbial infection) Involved in immunodeficiency virus (HIV-1) infection by importing the pre-integration complex (PIC) into the nucleus. Required for a nuclear maturation step of HIV-1 prior to integration. The sequence is that of Transportin-3 from Homo sapiens (Human).